The chain runs to 655 residues: Macrolide export ATP-binding/permease protein MacB (655 aa).

Positions 6 to 244 (IELRDVWREF…DALAGDEGPE (239 aa)) constitute an ABC transporter domain. 42-49 (GASGSGKS) serves as a coordination point for ATP. Positions 225-252 (DQARPDAPPLDALAGDEGPEAPRPAPQP) are disordered. The next 4 helical transmembrane spans lie at 280 to 300 (LTMLGIIIGIAAVVSVVALGA), 527 to 547 (LTLLVSMIAVISLVVVGIGVM), 583 to 603 (VLVCLIGGVLGILLSLSIGVL), and 620 to 640 (SMVLAFVCSTLIGVAFGFLPA).

The protein belongs to the ABC transporter superfamily. Macrolide exporter (TC 3.A.1.122) family. As to quaternary structure, homodimer.

It is found in the cell inner membrane. Its function is as follows. Non-canonical ABC transporter that contains transmembrane domains (TMD), which form a pore in the inner membrane, and an ATP-binding domain (NBD), which is responsible for energy generation. Confers resistance against macrolides. The chain is Macrolide export ATP-binding/permease protein MacB from Bordetella avium (strain 197N).